Consider the following 299-residue polypeptide: GTPase Era (299 aa).

Residues 4-171 (KSGFVAILGR…VDILSENLDE (168 aa)) form the Era-type G domain. The G1 stretch occupies residues 12 to 19 (GRPNVGKS). Position 12-19 (12-19 (GRPNVGKS)) interacts with GTP. The tract at residues 38–42 (QTTRN) is G2. The interval 59–62 (DTPG) is G3. Residues 59-63 (DTPGI) and 121-124 (NKID) contribute to the GTP site. The segment at 121-124 (NKID) is G4. The G5 stretch occupies residues 150 to 152 (ISA). The KH type-2 domain occupies 202 to 280 (TREEIPHSVA…FLETWVKVKK (79 aa)).

Belongs to the TRAFAC class TrmE-Era-EngA-EngB-Septin-like GTPase superfamily. Era GTPase family. As to quaternary structure, monomer.

Its subcellular location is the cytoplasm. The protein localises to the cell membrane. An essential GTPase that binds both GDP and GTP, with rapid nucleotide exchange. Plays a role in 16S rRNA processing and 30S ribosomal subunit biogenesis and possibly also in cell cycle regulation and energy metabolism. In Streptococcus pneumoniae (strain Hungary19A-6), this protein is GTPase Era.